The sequence spans 435 residues: Protein phosphatase 2C homolog 2 (435 aa).

Positions I23–L298 constitute a PPM-type phosphatase domain. Residues D71, G72, D240, and D289 each coordinate Mn(2+). Positions D366–S435 are disordered. A compositionally biased stretch (basic and acidic residues) spans E381 to G392. The segment covering G409–T418 has biased composition (low complexity). Over residues V419–S435 the composition is skewed to polar residues.

This sequence belongs to the PP2C family. The cofactor is Mg(2+). It depends on Mn(2+) as a cofactor.

It is found in the cytoplasm. Its subcellular location is the nucleus. It carries out the reaction O-phospho-L-seryl-[protein] + H2O = L-seryl-[protein] + phosphate. The catalysed reaction is O-phospho-L-threonyl-[protein] + H2O = L-threonyl-[protein] + phosphate. Dephosphorylating regulator for many key proteins. Dephosphorylates phosphoglycerate kinase pgk1 at least on 'Ser-203' to negatively regulate targeting of pgk1 to the mitochondrion, thereby negatively regulating production of acetyl-CoA and consequently aflatoxin biosynthesis. This Aspergillus flavus (strain ATCC 200026 / FGSC A1120 / IAM 13836 / NRRL 3357 / JCM 12722 / SRRC 167) protein is Protein phosphatase 2C homolog 2.